Here is a 279-residue protein sequence, read N- to C-terminus: Shikimate dehydrogenase (NADP(+)) (279 aa).

Shikimate contacts are provided by residues 19 to 21 (SRS) and Thr-66. The active-site Proton acceptor is Lys-70. Residues Asn-91 and Asp-106 each contribute to the shikimate site. NADP(+)-binding positions include 129-133 (GAGGA) and Phe-222. Tyr-224 lines the shikimate pocket. An NADP(+)-binding site is contributed by Gly-243.

The protein belongs to the shikimate dehydrogenase family. In terms of assembly, homodimer.

The enzyme catalyses shikimate + NADP(+) = 3-dehydroshikimate + NADPH + H(+). It functions in the pathway metabolic intermediate biosynthesis; chorismate biosynthesis; chorismate from D-erythrose 4-phosphate and phosphoenolpyruvate: step 4/7. Its function is as follows. Involved in the biosynthesis of the chorismate, which leads to the biosynthesis of aromatic amino acids. Catalyzes the reversible NADPH linked reduction of 3-dehydroshikimate (DHSA) to yield shikimate (SA). The sequence is that of Shikimate dehydrogenase (NADP(+)) from Anaeromyxobacter sp. (strain Fw109-5).